Reading from the N-terminus, the 256-residue chain is MLNLENKTYVIMGIANKRSIAFGVAKVLDQLGAKLVFTYRKERSRKELEKLLEQLNQPEAHLYQIDVQSDEEVINGFEQIGKDVGNIDGVYHSIAFANMEDLRGRFSETSREGFLLAQDISSYSLTIVAHEAKKLMPEGGSIVATTYLGGEFAVQNYNVMGVAKASLEANVKYLALDLGPDNIRVNAISASPIRTLSAKGVGGFNTILKEIEERAPLKRNVDQVEVGKTAAYLLSDLSSGVTGENIHVDSGFHAIK.

NADP(+) is bound by residues glycine 13, 19 to 20 (SI), 40 to 44 (RKERS), 66 to 67 (DV), and isoleucine 94. Residue alanine 97 participates in substrate binding. Catalysis depends on proton acceptor residues tyrosine 147 and tyrosine 157. NADP(+) is bound by residues lysine 164 and 193 to 197 (IRTLS).

Belongs to the short-chain dehydrogenases/reductases (SDR) family. FabI subfamily. Homotetramer.

The enzyme catalyses a 2,3-saturated acyl-[ACP] + NADP(+) = a (2E)-enoyl-[ACP] + NADPH + H(+). The protein operates within lipid metabolism; fatty acid biosynthesis. With respect to regulation, inhibited by 1,4-disubstituted imidazoles, 1,4-benzodiazepine, naphthyridinone derivatives, triclosan and its diphenyl ether analgues. Catalyzes the reduction of a carbon-carbon double bond in an enoyl moiety that is covalently linked to an acyl carrier protein (ACP). It has a preference for a long chain (C12) substrate compared to the shorter (C4) acyl group. Involved in the elongation cycle of fatty acid which are used in the lipid metabolism. The polypeptide is Enoyl-[acyl-carrier-protein] reductase [NADPH] FabI (fabI) (Staphylococcus aureus (strain NCTC 8325 / PS 47)).